The following is a 266-amino-acid chain: Undecaprenyl-diphosphatase 1 (266 aa).

8 helical membrane passes run 1–21 (MDTFQVIILALIQGLTEFLPI), 39–59 (QGLSFDVAVNTGSLFAVVIYF), 87–107 (WWIILATLPAVFFGFMAKDFI), 114–134 (TGVIAVTTVVFGLLLWWADKM), 149–169 (ALLIGFAQALALIPGTSRSGA), 183–203 (AAARFSFLMSVPVSLGAAILV), 218–238 (ALTLGTVISFAAAYLCIHYFL), and 246–266 (MTPFVIYRLALGAVLCGFIFL).

Belongs to the UppP family.

The protein resides in the cell inner membrane. The catalysed reaction is di-trans,octa-cis-undecaprenyl diphosphate + H2O = di-trans,octa-cis-undecaprenyl phosphate + phosphate + H(+). In terms of biological role, catalyzes the dephosphorylation of undecaprenyl diphosphate (UPP). Confers resistance to bacitracin. This is Undecaprenyl-diphosphatase 1 from Shewanella oneidensis (strain ATCC 700550 / JCM 31522 / CIP 106686 / LMG 19005 / NCIMB 14063 / MR-1).